The chain runs to 286 residues: Interferon-induced 35 kDa protein homolog (286 aa).

A leucine-zipper region spans residues 5–26 (LQTVLYSLQEEQARLKMRLQEL). NID domains follow at residues 81-170 (ALVT…GDVE) and 183-266 (FADE…GEVE).

It belongs to the NMI family. In terms of assembly, homodimer. Also interacts with B-ATF. Interacts with TRIM21. Interacts (via NID domains) with NMI (via NID domains); the interaction is direct and is facilitated by TRIM21. Post-translationally, phosphorylated. Dephosphorylation correlates with the formation of a complex with NMI.

It localises to the cytoplasm. Its subcellular location is the nucleus. It is found in the secreted. In terms of biological role, acts as a signaling pathway regulator involved in innate immune system response. In response to interferon IFN-alpha, associates in a complex with transcriptional regulator NMI to regulate immune response; the complex formation prevents proteasome-mediated degradation of IFI35 and correlates with IFI35 dephosphorylation. In complex with NMI, inhibits virus-triggered type I interferon/IFN-beta production. In complex with NMI, negatively regulates nuclear factor NF-kappa-B signaling by inhibiting the nuclear translocation, activation and transcription of the NF-kappa-B subunit p65/RELA, resulting in the inhibition of endothelial cell proliferation, migration and re-endothelialization of injured arteries. Beside its role as an intracellular signaling pathway regulator, also functions extracellularly as damage-associated molecular patterns (DAMPs) to promote inflammation when actively released by macrophage to the extracellular space during cell injury and pathogen invasion. Macrophage-secreted IFI35 activates NF-kappa-B signaling in adjacent macrophages through Toll-like receptor 4/TLR4 activation, thereby inducing NF-kappa-B translocation from the cytoplasm into the nucleus which promotes the release of pro-inflammatory cytokines. This is Interferon-induced 35 kDa protein homolog from Mus musculus (Mouse).